Consider the following 110-residue polypeptide: Thioredoxin Asp f 29 (110 aa).

The Thioredoxin domain maps to 1 to 110; the sequence is MSHNVEKITD…LEAAIKAHVA (110 aa). Catalysis depends on nucleophile residues Cys34 and Cys37. Residues Cys34 and Cys37 are joined by a disulfide bond.

Belongs to the thioredoxin family.

Functionally, participates in various redox reactions through the reversible oxidation of its active center dithiol to a disulfide and catalyzes dithiol-disulfide exchange reactions. This Aspergillus fumigatus (Neosartorya fumigata) protein is Thioredoxin Asp f 29.